The primary structure comprises 265 residues: Undecaprenyl-diphosphatase (265 aa).

7 helical membrane-spanning segments follow: residues 41–61 (IAYTFGLFMEMGSIGSALIYF), 75–95 (LKFLVVVTALTGIVGVPLYVI), 104–124 (YNPSIPMIFLGIALIADGIYI), 137–157 (LSTKEMILIGIAQGIAALPGV), 180–200 (YSYLAYIPAAIGSVGTTLLFT), 215–235 (GIALAVISALLTGLVVIGFLL), and 244–264 (YLIDFMLGGIAVLVSMLGLII).

This sequence belongs to the UppP family.

The protein localises to the cell membrane. The enzyme catalyses di-trans,octa-cis-undecaprenyl diphosphate + H2O = di-trans,octa-cis-undecaprenyl phosphate + phosphate + H(+). Catalyzes the dephosphorylation of undecaprenyl diphosphate (UPP). This Saccharolobus islandicus (strain Y.N.15.51 / Yellowstone #2) (Sulfolobus islandicus) protein is Undecaprenyl-diphosphatase.